The sequence spans 473 residues: Glutamine synthetase (473 aa).

A GS beta-grasp domain is found at Glu15 to Gly100. The GS catalytic domain maps to Pro107–Cys473. Residue Glu132 coordinates Mn(2+). Glu134 serves as a coordination point for Mg(2+). Residue Glu210 participates in ATP binding. Mg(2+) contacts are provided by Glu215 and Glu223. L-glutamate contacts are provided by residues Asn267–Gly268 and Gly268. Residue His272 coordinates Mg(2+). Residues His274 to Ser276 and Ser276 contribute to the ATP site. L-glutamate-binding residues include Arg324, Glu330, and Arg342. Positions 342, 347, and 356 each coordinate ATP. A Mn(2+)-binding site is contributed by Glu361. Residue Arg363 participates in L-glutamate binding. O-AMP-tyrosine is present on Tyr401.

Belongs to the glutamine synthetase family. As to quaternary structure, oligomer of 12 subunits arranged in the form of two hexagons. The cofactor is Mg(2+).

Its subcellular location is the cytoplasm. The catalysed reaction is L-glutamate + NH4(+) + ATP = L-glutamine + ADP + phosphate + H(+). With respect to regulation, inhibited by ADP (90%), AMP (80%), alanine (52%) and aspartate (41%). The activity of this enzyme could be controlled by adenylation under conditions of abundant glutamine. Involved in nitrogen metabolism via ammonium assimilation. Catalyzes the ATP-dependent biosynthesis of glutamine from glutamate and ammonia. This chain is Glutamine synthetase, found in Synechocystis sp. (strain ATCC 27184 / PCC 6803 / Kazusa).